Reading from the N-terminus, the 38-residue chain is Large ribosomal subunit protein bL36B (38 aa).

Belongs to the bacterial ribosomal protein bL36 family.

The polypeptide is Large ribosomal subunit protein bL36B (Prochlorococcus marinus (strain MIT 9515)).